Reading from the N-terminus, the 55-residue chain is Large ribosomal subunit protein bL33 (55 aa).

This sequence belongs to the bacterial ribosomal protein bL33 family.

This Sinorhizobium fredii (strain NBRC 101917 / NGR234) protein is Large ribosomal subunit protein bL33.